A 105-amino-acid polypeptide reads, in one-letter code: Large ribosomal subunit protein bL21 (105 aa).

It belongs to the bacterial ribosomal protein bL21 family. As to quaternary structure, part of the 50S ribosomal subunit. Contacts protein L20.

This protein binds to 23S rRNA in the presence of protein L20. The chain is Large ribosomal subunit protein bL21 from Frankia casuarinae (strain DSM 45818 / CECT 9043 / HFP020203 / CcI3).